The following is a 330-amino-acid chain: Deoxyhypusine hydroxylase (330 aa).

HEAT-like PBS-type repeat units lie at residues 57–83, 90–116, and 199–225; these read LKHE…VLRN, VRHE…YLSD, and ERYR…GFSG. The Fe cation site is built by His59, Glu60, His92, and Glu93. Residues His232, Glu233, His265, and Glu266 each coordinate Fe cation. An HEAT-like PBS-type 4 repeat occupies 263–289; it reads VRHEAAEALGGIATPEVLPPLKEWVAR.

The protein belongs to the deoxyhypusine hydroxylase family. The cofactor is Fe(2+).

The protein localises to the cytoplasm. The protein resides in the nucleus. The catalysed reaction is [eIF5A protein]-deoxyhypusine + AH2 + O2 = [eIF5A protein]-hypusine + A + H2O. Its pathway is protein modification; eIF5A hypusination. Functionally, catalyzes the hydroxylation of the N(6)-(4-aminobutyl)-L-lysine intermediate to form hypusine, an essential post-translational modification only found in mature eIF-5A factor. This Lentinula edodes (Shiitake mushroom) protein is Deoxyhypusine hydroxylase.